A 547-amino-acid polypeptide reads, in one-letter code: Chaperonin GroEL (547 aa).

ATP is bound by residues 30–33, Lys51, 87–91, Gly415, and Asp496; these read TLGP and DGTTT.

This sequence belongs to the chaperonin (HSP60) family. As to quaternary structure, forms a cylinder of 14 subunits composed of two heptameric rings stacked back-to-back. Interacts with the co-chaperonin GroES.

The protein resides in the cytoplasm. It carries out the reaction ATP + H2O + a folded polypeptide = ADP + phosphate + an unfolded polypeptide.. In terms of biological role, together with its co-chaperonin GroES, plays an essential role in assisting protein folding. The GroEL-GroES system forms a nano-cage that allows encapsulation of the non-native substrate proteins and provides a physical environment optimized to promote and accelerate protein folding. This chain is Chaperonin GroEL, found in Chlorobaculum parvum (strain DSM 263 / NCIMB 8327) (Chlorobium vibrioforme subsp. thiosulfatophilum).